The primary structure comprises 61 residues: Small ribosomal subunit protein uS14 (61 aa).

Residues cysteine 24, cysteine 27, cysteine 40, and cysteine 43 each coordinate Zn(2+).

This sequence belongs to the universal ribosomal protein uS14 family. Zinc-binding uS14 subfamily. In terms of assembly, part of the 30S ribosomal subunit. Contacts proteins S3 and S10. The cofactor is Zn(2+).

Functionally, binds 16S rRNA, required for the assembly of 30S particles and may also be responsible for determining the conformation of the 16S rRNA at the A site. The sequence is that of Small ribosomal subunit protein uS14 from Oleidesulfovibrio alaskensis (strain ATCC BAA-1058 / DSM 17464 / G20) (Desulfovibrio alaskensis).